The sequence spans 171 residues: Voltage-dependent P/Q-type calcium channel subunit alpha-1A (171 aa).

The chain crosses the membrane as a helical span at residues 1–11 (FVTVLGSITDI). The stretch at 1-171 (FVTVLGSITD…LMLNLFVAVI (171 aa)) is one IV repeat. Residues 12–18 (LVTEFGN) are Extracellular-facing. A helical membrane pass occupies residues 19-37 (NFINLSFLRLFRAARLIKL). Over 38–56 (LRQGYTIRILLWTFVQSFK) the chain is Cytoplasmic. Residues 57–76 (ALPYVCLLIAMLFFIYAIIG) traverse the membrane as a helical segment. Topologically, residues 77–143 (MQVFGNIGIE…ENSGIKEDEC (67 aa)) are extracellular. Residues 144–168 (GNEFAYFYFVSFIFLCSFLMLNLFV) form a helical membrane-spanning segment. Topologically, residues 169 to 171 (AVI) are cytoplasmic.

This sequence belongs to the calcium channel alpha-1 subunit (TC 1.A.1.11) family. CACNA1A subfamily. Voltage-dependent calcium channels are multisubunit complexes, consisting of alpha-1, alpha-2, beta and delta subunits in a 1:1:1:1 ratio. The channel activity is directed by the pore-forming and voltage-sensitive alpha-1 subunit. In many cases, this subunit is sufficient to generate voltage-sensitive calcium channel activity. The auxiliary subunits beta and alpha-2/delta linked by a disulfide bridge regulate the channel activity.

It is found in the cell membrane. The catalysed reaction is Ca(2+)(in) = Ca(2+)(out). The isoform alpha-1A gives rise to P and/or Q-type calcium currents. P/Q-type calcium channels belong to the 'high-voltage activated' (HVA) group. This is Voltage-dependent P/Q-type calcium channel subunit alpha-1A (CACNA1A) from Gallus gallus (Chicken).